Consider the following 461-residue polypeptide: uncharacterized protein (461 aa).

Positions Met1–Tyr19 are enriched in basic and acidic residues. The disordered stretch occupies residues Met1–Ile21.

It belongs to the CapA family.

In terms of biological role, could be involved in the biosynthesis of a cell wall component. This is an uncharacterized protein from Sinorhizobium fredii (strain NBRC 101917 / NGR234).